Consider the following 445-residue polypeptide: Phosphoglucosamine mutase (445 aa).

Residue Ser-105 is the Phosphoserine intermediate of the active site. The Mg(2+) site is built by Ser-105, Asp-244, Asp-246, and Asp-248. Ser-105 carries the phosphoserine modification.

The protein belongs to the phosphohexose mutase family. Requires Mg(2+) as cofactor. Activated by phosphorylation.

It carries out the reaction alpha-D-glucosamine 1-phosphate = D-glucosamine 6-phosphate. Its function is as follows. Catalyzes the conversion of glucosamine-6-phosphate to glucosamine-1-phosphate. The polypeptide is Phosphoglucosamine mutase (Janthinobacterium sp. (strain Marseille) (Minibacterium massiliensis)).